Here is a 315-residue protein sequence, read N- to C-terminus: PDZ domain-containing protein GIPC2 (315 aa).

Residues 1–12 are compositionally biased toward basic residues; it reads MPLKLRGKKKAK. The tract at residues 1 to 34 is disordered; it reads MPLKLRGKKKAKSKETAGLVEGEPTGAGGGSLSA. The 81-residue stretch at 117 to 197 folds into the PDZ domain; it reads EVNVYKSEDS…EELFTMKLIE (81 aa).

The protein belongs to the GIPC family. In terms of assembly, probably interacts with SEMA5A. As to expression, expressed at highest levels in ascending colon and at moderate levels in adult kidney. Expressed at low levels in adult pancreas and at very low levels in adult liver. Expression is down-regulated in several primary tumors, such as kidney, colon and rectal tumors.

Its subcellular location is the cytoplasm. The sequence is that of PDZ domain-containing protein GIPC2 (GIPC2) from Homo sapiens (Human).